We begin with the raw amino-acid sequence, 291 residues long: DNA N6-methyl adenine demethylase (291 aa).

In terms of domain architecture, Fe2OG dioxygenase spans 85–256 (GLTLIHNFLS…RGRRIALTMR (172 aa)). Position 171–173 (171–173 (LEY)) interacts with 2-oxoglutarate. Residues His-184, Asp-186, and His-239 each contribute to the Fe cation site.

The protein belongs to the alkB family. As to quaternary structure, interacts with top-2; the interaction is required for localization of top-2 to DNA. Also interacts with mtss-1, his-24, ule-3, C18B2.3, pgl-1, ceh-93, mcm-4 and F37C4.5. It depends on Fe(2+) as a cofactor.

It is found in the nucleus. It catalyses the reaction an N(6)-methyl-2'-deoxyadenosine in DNA + 2-oxoglutarate + O2 = a 2'-deoxyadenosine in DNA + formaldehyde + succinate + CO2. In terms of biological role, dioxygenase that specifically demethylates DNA methylated on the 6th position of adenine (N(6)-methyladenosine) DNA. N(6)-methyladenosine (m6A) DNA is involved in epigenetic transgenerational inheritance. Plays an essential role in DNA replication and repair in the germline during meiosis. Binds to components of the DNA replication machinery such as top-2, and directs their localization to DNA to control DNA replication. This is DNA N6-methyl adenine demethylase from Caenorhabditis elegans.